Reading from the N-terminus, the 200-residue chain is Small heat shock protein hspG2 (200 aa).

Residues 33–200 (NKRIDIIPSM…DNFQIKLKSI (168 aa)) form the sHSP domain. Residues 86-139 (KLQQQQQQQSEKSSQSTNNKDDDEPSIEEYEDDTKLKSNLNKNTENKDENKTTS) form a disordered region. Positions 88-101 (QQQQQQQSEKSSQS) are enriched in low complexity. Over residues 106-117 (DDDEPSIEEYED) the composition is skewed to acidic residues.

It belongs to the small heat shock protein (HSP20) family.

The sequence is that of Small heat shock protein hspG2 (hspG2) from Dictyostelium discoideum (Social amoeba).